The sequence spans 97 residues: Acylphosphatase (97 aa).

Positions 5–92 (RAHVWISGRV…GEFVRFEITF (88 aa)) constitute an Acylphosphatase-like domain. Active-site residues include Arg20 and Asn38.

The protein belongs to the acylphosphatase family.

It catalyses the reaction an acyl phosphate + H2O = a carboxylate + phosphate + H(+). The polypeptide is Acylphosphatase (acyP) (Syntrophobacter fumaroxidans (strain DSM 10017 / MPOB)).